The following is a 2618-amino-acid chain: Mediator of RNA polymerase II transcription subunit 13 (2618 aa).

Low complexity-rich tracts occupy residues 232–255 (FAAA…VPNP), 509–519 (TPASGTGSLSA), and 532–543 (DSKQLVQQQIQQ). Disordered regions lie at residues 232–279 (FAAA…AAPP), 509–543 (TPAS…QIQQ), 569–731 (GNTP…SGGP), 916–957 (LNIK…AEGL), 970–995 (TSSN…NGGC), 1036–1055 (TKMF…SSPC), 1268–1384 (PRTP…TGVV), 1521–1557 (ASAS…ITGY), 1614–1633 (SRKN…LDKI), and 1985–2060 (KTLL…GETK). 2 positions are modified to phosphothreonine: Thr-571 and Thr-575. Composition is skewed to polar residues over residues 581–590 (STYSRNSLGG), 634–643 (APTSVSNLQQ), and 669–681 (SITA…QTPS). Residues 692–706 (AGGGPAGGQGLGTGP) are compositionally biased toward gly residues. The span at 711–723 (AQQPATPTAATSA) shows a compositional bias: low complexity. Over residues 939 to 949 (NSSGGGSGSGG) the composition is skewed to gly residues. Over residues 1272–1295 (LTPSTVPQPLSSGGSQYLLNQLNC) the composition is skewed to polar residues. 2 stretches are compositionally biased toward gly residues: residues 1375–1384 (GLGGGATGVV) and 1528–1538 (AGSGHGHGPNG). Over residues 1539 to 1553 (GSNSSSCTPPSSNPH) the composition is skewed to low complexity. Over residues 1614–1629 (SRKNQNKQGPGETSSA) the composition is skewed to polar residues. A compositionally biased stretch (low complexity) spans 1993–2014 (GSGNSHSKGGSSCSSNSSSVSG). Phosphoserine is present on residues Ser-2472 and Ser-2475.

Belongs to the Mediator complex subunit 13 family. In terms of assembly, component of the Cdk8 module of the Mediator complex, composed of CycC, Cdk8, kto and skd.

It is found in the nucleus. In terms of biological role, component of the Mediator complex, a coactivator involved in the regulated transcription of nearly all RNA polymerase II-dependent genes. Mediator functions as a bridge to convey information from gene-specific regulatory proteins to the basal RNA polymerase II transcription machinery. Mediator is recruited to promoters by direct interactions with regulatory proteins and serves as a scaffold for the assembly of a functional preinitiation complex with RNA polymerase II and the general transcription factors. Required for leg and eye development and macrochaete specification or differentiation. Negatively regulates sex comb development. Required for activated transcription of the MtnB and MtnD genes. This is Mediator of RNA polymerase II transcription subunit 13 (skd) from Drosophila melanogaster (Fruit fly).